A 345-amino-acid chain; its full sequence is Phosphate acyltransferase (345 aa).

It belongs to the PlsX family. Homodimer. Probably interacts with PlsY.

Its subcellular location is the cytoplasm. It catalyses the reaction a fatty acyl-[ACP] + phosphate = an acyl phosphate + holo-[ACP]. It participates in lipid metabolism; phospholipid metabolism. Its function is as follows. Catalyzes the reversible formation of acyl-phosphate (acyl-PO(4)) from acyl-[acyl-carrier-protein] (acyl-ACP). This enzyme utilizes acyl-ACP as fatty acyl donor, but not acyl-CoA. This Anaplasma phagocytophilum (strain HZ) protein is Phosphate acyltransferase.